We begin with the raw amino-acid sequence, 301 residues long: Probable aspartoacylase (301 aa).

Residues His13 and Glu16 each contribute to the Zn(2+) site. Substrate contacts are provided by residues Arg54 and 61–62 (NR). His105 contacts Zn(2+). Substrate contacts are provided by Glu163 and Tyr273.

It belongs to the AspA/AstE family. Aspartoacylase subfamily. The cofactor is Zn(2+).

The catalysed reaction is an N-acyl-L-aspartate + H2O = a carboxylate + L-aspartate. This chain is Probable aspartoacylase, found in Prochlorococcus marinus (strain MIT 9215).